Consider the following 30-residue polypeptide: Thaumatin-like protein (30 aa).

Belongs to the thaumatin family.

It is found in the secreted. Has antifungal activity against C.comatus, F.oxysporum and P.ostreatus. This chain is Thaumatin-like protein, found in Phaseolus vulgaris (Kidney bean).